The chain runs to 108 residues: uncharacterized protein (108 aa).

3 helical membrane passes run 10–32 (SLCY…FVVN), 45–67 (ISHI…GAVA), and 77–99 (FVII…WNVI).

Its subcellular location is the cell membrane. This is an uncharacterized protein from Bacillus subtilis (strain 168).